A 149-amino-acid chain; its full sequence is Nucleoside diphosphate kinase (149 aa).

6 residues coordinate ATP: Lys-9, Phe-57, Arg-85, Thr-91, Arg-102, and Asn-112. His-115 (pros-phosphohistidine intermediate) is an active-site residue.

The protein belongs to the NDK family. As to quaternary structure, homotetramer. Requires Mg(2+) as cofactor.

The protein localises to the cytoplasm. The catalysed reaction is a 2'-deoxyribonucleoside 5'-diphosphate + ATP = a 2'-deoxyribonucleoside 5'-triphosphate + ADP. The enzyme catalyses a ribonucleoside 5'-diphosphate + ATP = a ribonucleoside 5'-triphosphate + ADP. Functionally, major role in the synthesis of nucleoside triphosphates other than ATP. The ATP gamma phosphate is transferred to the NDP beta phosphate via a ping-pong mechanism, using a phosphorylated active-site intermediate. The chain is Nucleoside diphosphate kinase from Heliobacterium modesticaldum (strain ATCC 51547 / Ice1).